We begin with the raw amino-acid sequence, 162 residues long: Lipoprotein signal peptidase (162 aa).

Helical transmembrane passes span 56-76 and 84-104; these read FLPP…VVWY and SPLF…NLID. Residues aspartate 113 and aspartate 139 contribute to the active site. Residues 132 to 152 traverse the membrane as a helical segment; that stretch reads WPIFNVADSCITIGACMIVLF.

The protein belongs to the peptidase A8 family.

The protein resides in the cell inner membrane. It catalyses the reaction Release of signal peptides from bacterial membrane prolipoproteins. Hydrolyzes -Xaa-Yaa-Zaa-|-(S,diacylglyceryl)Cys-, in which Xaa is hydrophobic (preferably Leu), and Yaa (Ala or Ser) and Zaa (Gly or Ala) have small, neutral side chains.. It functions in the pathway protein modification; lipoprotein biosynthesis (signal peptide cleavage). Its function is as follows. This protein specifically catalyzes the removal of signal peptides from prolipoproteins. This chain is Lipoprotein signal peptidase, found in Chlorobaculum tepidum (strain ATCC 49652 / DSM 12025 / NBRC 103806 / TLS) (Chlorobium tepidum).